Consider the following 444-residue polypeptide: 3-phosphoshikimate 1-carboxyvinyltransferase (444 aa).

3-phosphoshikimate is bound by residues K32, S33, and R37. K32 is a phosphoenolpyruvate binding site. G105 and R133 together coordinate phosphoenolpyruvate. S178, Q180, D326, and K353 together coordinate 3-phosphoshikimate. Phosphoenolpyruvate is bound at residue Q180. The Proton acceptor role is filled by D326. Residues R357 and R398 each contribute to the phosphoenolpyruvate site.

Belongs to the EPSP synthase family. Monomer.

It is found in the cytoplasm. It carries out the reaction 3-phosphoshikimate + phosphoenolpyruvate = 5-O-(1-carboxyvinyl)-3-phosphoshikimate + phosphate. It functions in the pathway metabolic intermediate biosynthesis; chorismate biosynthesis; chorismate from D-erythrose 4-phosphate and phosphoenolpyruvate: step 6/7. Its function is as follows. Catalyzes the transfer of the enolpyruvyl moiety of phosphoenolpyruvate (PEP) to the 5-hydroxyl of shikimate-3-phosphate (S3P) to produce enolpyruvyl shikimate-3-phosphate and inorganic phosphate. This chain is 3-phosphoshikimate 1-carboxyvinyltransferase, found in Nitrosococcus oceani (strain ATCC 19707 / BCRC 17464 / JCM 30415 / NCIMB 11848 / C-107).